We begin with the raw amino-acid sequence, 110 residues long: UPF0122 protein SaurJH9_1295 (110 aa).

The protein belongs to the UPF0122 family.

In terms of biological role, might take part in the signal recognition particle (SRP) pathway. This is inferred from the conservation of its genetic proximity to ftsY/ffh. May be a regulatory protein. In Staphylococcus aureus (strain JH9), this protein is UPF0122 protein SaurJH9_1295.